Consider the following 240-residue polypeptide: tRNA (guanine-N(7)-)-methyltransferase (240 aa).

S-adenosyl-L-methionine-binding residues include Glu-71, Glu-96, Asp-123, and Asp-146. Asp-146 is a catalytic residue. Residues Lys-150, Asp-182, and 219–222 each bind substrate; that span reads TKFE.

Belongs to the class I-like SAM-binding methyltransferase superfamily. TrmB family.

The enzyme catalyses guanosine(46) in tRNA + S-adenosyl-L-methionine = N(7)-methylguanosine(46) in tRNA + S-adenosyl-L-homocysteine. Its pathway is tRNA modification; N(7)-methylguanine-tRNA biosynthesis. Functionally, catalyzes the formation of N(7)-methylguanine at position 46 (m7G46) in tRNA. The chain is tRNA (guanine-N(7)-)-methyltransferase from Hydrogenovibrio crunogenus (strain DSM 25203 / XCL-2) (Thiomicrospira crunogena).